Consider the following 600-residue polypeptide: Proline--tRNA ligase (600 aa).

Belongs to the class-II aminoacyl-tRNA synthetase family. ProS type 1 subfamily. In terms of assembly, homodimer.

It is found in the cytoplasm. The enzyme catalyses tRNA(Pro) + L-proline + ATP = L-prolyl-tRNA(Pro) + AMP + diphosphate. Its function is as follows. Catalyzes the attachment of proline to tRNA(Pro) in a two-step reaction: proline is first activated by ATP to form Pro-AMP and then transferred to the acceptor end of tRNA(Pro). As ProRS can inadvertently accommodate and process non-cognate amino acids such as alanine and cysteine, to avoid such errors it has two additional distinct editing activities against alanine. One activity is designated as 'pretransfer' editing and involves the tRNA(Pro)-independent hydrolysis of activated Ala-AMP. The other activity is designated 'posttransfer' editing and involves deacylation of mischarged Ala-tRNA(Pro). The misacylated Cys-tRNA(Pro) is not edited by ProRS. The chain is Proline--tRNA ligase from Synechococcus elongatus (strain ATCC 33912 / PCC 7942 / FACHB-805) (Anacystis nidulans R2).